The chain runs to 211 residues: ATP-dependent Clp protease proteolytic subunit 1 (211 aa).

The active-site Nucleophile is S107. H132 is a catalytic residue.

The protein belongs to the peptidase S14 family. Fourteen ClpP subunits assemble into 2 heptameric rings which stack back to back to give a disk-like structure with a central cavity, resembling the structure of eukaryotic proteasomes.

It localises to the cytoplasm. It carries out the reaction Hydrolysis of proteins to small peptides in the presence of ATP and magnesium. alpha-casein is the usual test substrate. In the absence of ATP, only oligopeptides shorter than five residues are hydrolyzed (such as succinyl-Leu-Tyr-|-NHMec, and Leu-Tyr-Leu-|-Tyr-Trp, in which cleavage of the -Tyr-|-Leu- and -Tyr-|-Trp bonds also occurs).. In terms of biological role, cleaves peptides in various proteins in a process that requires ATP hydrolysis. Has a chymotrypsin-like activity. Plays a major role in the degradation of misfolded proteins. In Mycolicibacterium paratuberculosis (strain ATCC BAA-968 / K-10) (Mycobacterium paratuberculosis), this protein is ATP-dependent Clp protease proteolytic subunit 1.